Reading from the N-terminus, the 390-residue chain is tRNA (guanine(26)-N(2))-dimethyltransferase (390 aa).

One can recognise a Trm1 methyltransferase domain in the interval 4-378 (HIIEEGLVKI…MPLDELKQLI (375 aa)). 5 residues coordinate S-adenosyl-L-methionine: arginine 37, arginine 67, aspartate 85, aspartate 112, and alanine 113. Residues cysteine 245, cysteine 248, cysteine 265, and cysteine 268 each coordinate Zn(2+).

It belongs to the class I-like SAM-binding methyltransferase superfamily. Trm1 family.

The enzyme catalyses guanosine(26) in tRNA + 2 S-adenosyl-L-methionine = N(2)-dimethylguanosine(26) in tRNA + 2 S-adenosyl-L-homocysteine + 2 H(+). Functionally, dimethylates a single guanine residue at position 26 of a number of tRNAs using S-adenosyl-L-methionine as donor of the methyl groups. The protein is tRNA (guanine(26)-N(2))-dimethyltransferase of Methanosphaera stadtmanae (strain ATCC 43021 / DSM 3091 / JCM 11832 / MCB-3).